The chain runs to 396 residues: MQTLDPVTPALLPLRRVTRPVQVGALTIGGNAPVVVQSMINEDTLDTPGAVAAIRALHKAGCELVRVTVPSLAHARALERIRKTLEDTYRPVPLVADVHHDGGPIALEVARHVDKVRINPGLFVFRRARLGDYTAEDVERARAQIREELKPLVDVLGAQDKAMRIGVNHGSLSERMLYIHGDTPEGMVQSAVEFVEICEQLGYHNLVISLKASRVPVMIAVYRLAAKLLDARGMHYPFHLGVTEAGDGEYGRIKSTAGIATLLADGIGDTIRVSLTEDPLKEIPVCYGILQALGLRRTMVEYVACPSCGRTLFNLETVLHRVREATRHLTGLNIAVMGCIVNGPGEMADADYGYVGKTPGTISLYRGREEIKKVPEARGVEALVDLIKSDGRWVDP.

Positions 305, 308, 339, and 346 each coordinate [4Fe-4S] cluster.

The protein belongs to the IspG family. Requires [4Fe-4S] cluster as cofactor.

It catalyses the reaction (2E)-4-hydroxy-3-methylbut-2-enyl diphosphate + 2 oxidized [2Fe-2S]-[ferredoxin] + H2O = 2-C-methyl-D-erythritol 2,4-cyclic diphosphate + 2 reduced [2Fe-2S]-[ferredoxin] + H(+). It participates in isoprenoid biosynthesis; isopentenyl diphosphate biosynthesis via DXP pathway; isopentenyl diphosphate from 1-deoxy-D-xylulose 5-phosphate: step 5/6. In terms of biological role, converts 2C-methyl-D-erythritol 2,4-cyclodiphosphate (ME-2,4cPP) into 1-hydroxy-2-methyl-2-(E)-butenyl 4-diphosphate. The sequence is that of 4-hydroxy-3-methylbut-2-en-1-yl diphosphate synthase (ferredoxin) from Gloeobacter violaceus (strain ATCC 29082 / PCC 7421).